A 266-amino-acid polypeptide reads, in one-letter code: 5'-nucleotidase SurE (266 aa).

Residues D8, D9, S39, and N93 each coordinate a divalent metal cation.

Belongs to the SurE nucleotidase family. Requires a divalent metal cation as cofactor.

It is found in the cytoplasm. The enzyme catalyses a ribonucleoside 5'-phosphate + H2O = a ribonucleoside + phosphate. Its function is as follows. Nucleotidase that shows phosphatase activity on nucleoside 5'-monophosphates. The polypeptide is 5'-nucleotidase SurE (Thermococcus gammatolerans (strain DSM 15229 / JCM 11827 / EJ3)).